A 315-amino-acid chain; its full sequence is Ferrochelatase (315 aa).

Positions 193 and 273 each coordinate Fe cation.

It belongs to the ferrochelatase family.

It localises to the cytoplasm. It carries out the reaction heme b + 2 H(+) = protoporphyrin IX + Fe(2+). It participates in porphyrin-containing compound metabolism; protoheme biosynthesis; protoheme from protoporphyrin-IX: step 1/1. Its function is as follows. Catalyzes the ferrous insertion into protoporphyrin IX. In Wolbachia pipientis wMel, this protein is Ferrochelatase.